The sequence spans 100 residues: Urease subunit gamma (100 aa).

The protein belongs to the urease gamma subunit family. Heterotrimer of UreA (gamma), UreB (beta) and UreC (alpha) subunits. Three heterotrimers associate to form the active enzyme.

It localises to the cytoplasm. The enzyme catalyses urea + 2 H2O + H(+) = hydrogencarbonate + 2 NH4(+). It participates in nitrogen metabolism; urea degradation; CO(2) and NH(3) from urea (urease route): step 1/1. The polypeptide is Urease subunit gamma (Burkholderia cenocepacia (strain ATCC BAA-245 / DSM 16553 / LMG 16656 / NCTC 13227 / J2315 / CF5610) (Burkholderia cepacia (strain J2315))).